The primary structure comprises 408 residues: CCA-adding enzyme (408 aa).

2 residues coordinate ATP: Gly-8 and Arg-11. Gly-8 and Arg-11 together coordinate CTP. Glu-21 and Asp-23 together coordinate Mg(2+). The ATP site is built by Arg-91, Arg-137, and Arg-140. The CTP site is built by Arg-91, Arg-137, and Arg-140. Positions 226-329 (TGYYTMTTLS…MTLFHVFDCW (104 aa)) constitute an HD domain.

It belongs to the tRNA nucleotidyltransferase/poly(A) polymerase family. Bacterial CCA-adding enzyme type 2 subfamily. Mg(2+) serves as cofactor.

It carries out the reaction a tRNA precursor + 2 CTP + ATP = a tRNA with a 3' CCA end + 3 diphosphate. It catalyses the reaction a tRNA with a 3' CCA end + 2 CTP + ATP = a tRNA with a 3' CCACCA end + 3 diphosphate. Functionally, catalyzes the addition and repair of the essential 3'-terminal CCA sequence in tRNAs without using a nucleic acid template. Adds these three nucleotides in the order of C, C, and A to the tRNA nucleotide-73, using CTP and ATP as substrates and producing inorganic pyrophosphate. tRNA 3'-terminal CCA addition is required both for tRNA processing and repair. Also involved in tRNA surveillance by mediating tandem CCA addition to generate a CCACCA at the 3' terminus of unstable tRNAs. While stable tRNAs receive only 3'-terminal CCA, unstable tRNAs are marked with CCACCA and rapidly degraded. In Blochmanniella pennsylvanica (strain BPEN), this protein is CCA-adding enzyme.